Consider the following 522-residue polypeptide: Zinc finger and BTB domain-containing protein 18 (522 aa).

The BTB domain occupies 24-91 (CDCTVLVGDA…MYEGKLQFKD (68 aa)). Positions 121-143 (ATTEADSTKKEEDASSCSDKVES) are enriched in basic and acidic residues. A disordered region spans residues 121 to 166 (ATTEADSTKKEEDASSCSDKVESLSDGSSHMAGDLPSDEDEGEDDK). S157 is modified (phosphoserine). A Glycyl lysine isopeptide (Lys-Gly) (interchain with G-Cter in SUMO2) cross-link involves residue K273. Positions 310–427 (EPAHLAPLRE…TFSCMYTLKR (118 aa)) are interaction with DNMT3A. 4 consecutive C2H2-type zinc fingers follow at residues 370–392 (FMCPLCNKVFPSPHILQIHLSTH), 410–432 (PTCSLCGKTFSCMYTLKRHERTH), 438–460 (YTCTQCGKSFQYSHNLSRHAVVH), and 466–489 (HACKWCERRFTQSGDLYRHIRKFH). A phosphoserine mark is found at S516 and S517.

Belongs to the krueppel C2H2-type zinc-finger protein family. ZBTB18 subfamily. In terms of assembly, interacts with DNMT3A.

The protein resides in the nucleus. Transcriptional repressor that plays a role in various developmental processes such as myogenesis and brain development. Specifically binds the consensus DNA sequence 5'-[AC]ACATCTG[GT][AC]-3' which contains the E box core, and acts by recruiting chromatin remodeling multiprotein complexes. Plays a key role in myogenesis by directly repressing the expression of ID2 and ID3, 2 inhibitors of skeletal myogenesis. Also involved in controlling cell division of progenitor cells and regulating the survival of postmitotic cortical neurons. May also play a role in the organization of chromosomes in the nucleus. This Rattus norvegicus (Rat) protein is Zinc finger and BTB domain-containing protein 18 (Zbtb18).